A 131-amino-acid polypeptide reads, in one-letter code: Small ribosomal subunit protein uS11 (131 aa).

This sequence belongs to the universal ribosomal protein uS11 family. Part of the 30S ribosomal subunit. Interacts with proteins S7 and S18. Binds to IF-3.

Located on the platform of the 30S subunit, it bridges several disparate RNA helices of the 16S rRNA. Forms part of the Shine-Dalgarno cleft in the 70S ribosome. This Natranaerobius thermophilus (strain ATCC BAA-1301 / DSM 18059 / JW/NM-WN-LF) protein is Small ribosomal subunit protein uS11.